The following is a 283-amino-acid chain: Mau operon transcriptional activator (283 aa).

The 58-residue stretch at 1–58 (MNWDDLRVVAAINRCGSFNRAAKMLNVEETTIARRLARLEGSLGCVLFQAVDGQRRPT) folds into the HTH lysR-type domain. The segment at residues 18 to 37 (FNRAAKMLNVEETTIARRLA) is a DNA-binding region (H-T-H motif).

The protein belongs to the LysR transcriptional regulatory family.

Transcriptional activator of the mau genes involved in methylamine metabolism. This Paracoccus denitrificans protein is Mau operon transcriptional activator (mauR).